We begin with the raw amino-acid sequence, 360 residues long: Archaemetzincin-2 (360 aa).

Zn(2+) is bound at residue His-254. Catalysis depends on Glu-255, which acts as the Proton acceptor. Residues His-258, His-264, Cys-265, Cys-270, Cys-289, and Cys-292 each coordinate Zn(2+).

The protein belongs to the peptidase M54 family. Zn(2+) is required as a cofactor. Down-regulated in testis from patients with maturation arrest (MA) or Sertoli cell-only syndrome (SCOS).

Its function is as follows. Probable zinc metalloprotease. The chain is Archaemetzincin-2 (AMZ2) from Homo sapiens (Human).